Here is a 364-residue protein sequence, read N- to C-terminus: Aminomethyltransferase (364 aa).

This sequence belongs to the GcvT family. As to quaternary structure, the glycine cleavage system is composed of four proteins: P, T, L and H.

It catalyses the reaction N(6)-[(R)-S(8)-aminomethyldihydrolipoyl]-L-lysyl-[protein] + (6S)-5,6,7,8-tetrahydrofolate = N(6)-[(R)-dihydrolipoyl]-L-lysyl-[protein] + (6R)-5,10-methylene-5,6,7,8-tetrahydrofolate + NH4(+). The glycine cleavage system catalyzes the degradation of glycine. The chain is Aminomethyltransferase from Citrobacter koseri (strain ATCC BAA-895 / CDC 4225-83 / SGSC4696).